The chain runs to 207 residues: Protein 6b (207 aa).

Residues 161–185 (NTLEEGEDDDDEMDDEGEAGGAEPR) form a disordered region. Acidic residues predominate over residues 164 to 178 (EEGEDDDDEMDDEGE).

Functionally, involved in tumor formation and increases auxin and cytokinin effects in host plants. In Agrobacterium tumefaciens (strain 15955), this protein is Protein 6b (6b).